The sequence spans 243 residues: Venom nerve growth factor (243 aa).

The first 18 residues, Met1 to Ala18, serve as a signal peptide directing secretion. The propeptide occupies Ala19–Asn125. The span at Gly47–Asp66 shows a compositional bias: basic and acidic residues. The interval Gly47–Gly70 is disordered. Cystine bridges form between Cys139–Cys204, Cys182–Cys232, and Cys192–Cys234. Asn148 carries an N-linked (GlcNAc...) asparagine glycan.

Belongs to the NGF-beta family. In terms of assembly, homodimer. Expressed by the venom gland.

The protein resides in the secreted. Functionally, nerve growth factor is important for the development and maintenance of the sympathetic and sensory nervous systems. It stimulates division and differentiation of sympathetic and embryonic sensory neurons as well as basal forebrain cholinergic neurons in the brain. Its relevance in the snake venom is not clear. However, it has been shown to inhibit metalloproteinase-dependent proteolysis of platelet glycoprotein Ib alpha, suggesting a metalloproteinase inhibition to prevent metalloprotease autodigestion and/or protection against prey proteases. Binds a lipid between the two protein chains in the homodimer. The lipid-bound form promotes histamine relase from mouse mast cells, contrary to the lipid-free form. The sequence is that of Venom nerve growth factor from Bungarus multicinctus (Many-banded krait).